The primary structure comprises 317 residues: 4-hydroxy-3-methylbut-2-enyl diphosphate reductase (317 aa).

Position 12 (Cys12) interacts with [4Fe-4S] cluster. Residues His41 and His74 each coordinate (2E)-4-hydroxy-3-methylbut-2-enyl diphosphate. Residues His41 and His74 each contribute to the dimethylallyl diphosphate site. Positions 41 and 74 each coordinate isopentenyl diphosphate. Cys96 provides a ligand contact to [4Fe-4S] cluster. His124 is a (2E)-4-hydroxy-3-methylbut-2-enyl diphosphate binding site. Residue His124 coordinates dimethylallyl diphosphate. Position 124 (His124) interacts with isopentenyl diphosphate. Residue Glu126 is the Proton donor of the active site. Thr169 serves as a coordination point for (2E)-4-hydroxy-3-methylbut-2-enyl diphosphate. Cys199 contributes to the [4Fe-4S] cluster binding site. Residues Ser227, Ser228, Asn229, and Ser271 each coordinate (2E)-4-hydroxy-3-methylbut-2-enyl diphosphate. Dimethylallyl diphosphate is bound by residues Ser227, Ser228, Asn229, and Ser271. Isopentenyl diphosphate contacts are provided by Ser227, Ser228, Asn229, and Ser271.

This sequence belongs to the IspH family. [4Fe-4S] cluster serves as cofactor.

The enzyme catalyses isopentenyl diphosphate + 2 oxidized [2Fe-2S]-[ferredoxin] + H2O = (2E)-4-hydroxy-3-methylbut-2-enyl diphosphate + 2 reduced [2Fe-2S]-[ferredoxin] + 2 H(+). It catalyses the reaction dimethylallyl diphosphate + 2 oxidized [2Fe-2S]-[ferredoxin] + H2O = (2E)-4-hydroxy-3-methylbut-2-enyl diphosphate + 2 reduced [2Fe-2S]-[ferredoxin] + 2 H(+). Its pathway is isoprenoid biosynthesis; dimethylallyl diphosphate biosynthesis; dimethylallyl diphosphate from (2E)-4-hydroxy-3-methylbutenyl diphosphate: step 1/1. It participates in isoprenoid biosynthesis; isopentenyl diphosphate biosynthesis via DXP pathway; isopentenyl diphosphate from 1-deoxy-D-xylulose 5-phosphate: step 6/6. Its function is as follows. Catalyzes the conversion of 1-hydroxy-2-methyl-2-(E)-butenyl 4-diphosphate (HMBPP) into a mixture of isopentenyl diphosphate (IPP) and dimethylallyl diphosphate (DMAPP). Acts in the terminal step of the DOXP/MEP pathway for isoprenoid precursor biosynthesis. The protein is 4-hydroxy-3-methylbut-2-enyl diphosphate reductase of Vibrio parahaemolyticus serotype O3:K6 (strain RIMD 2210633).